The primary structure comprises 275 residues: 4,5-DOPA dioxygenase extradiol 1 (275 aa).

Positions 22, 60, 182, and 236 each coordinate Zn(2+).

This sequence belongs to the DODA-type extradiol aromatic ring-opening dioxygenase family. Requires Zn(2+) as cofactor.

The catalysed reaction is L-dopa + O2 = 4-(L-alanin-3-yl)-2-hydroxy-cis,cis-muconate 6-semialdehyde + H(+). It participates in pigment biosynthesis; betalain biosynthesis. In terms of biological role, opens the cyclic ring of dihydroxy-phenylalanine (DOPA) between carbons 4 and 5, thus producing an unstable seco-DOPA that rearranges nonenzymatically to betalamic acid. The protein is 4,5-DOPA dioxygenase extradiol 1 of Beta vulgaris (Sugar beet).